The following is a 137-amino-acid chain: Basic phospholipase A2 homolog 4a (137 aa).

A signal peptide spans Met-1 to Gly-16. 7 disulfide bridges follow: Cys-42-Cys-131, Cys-44-Cys-60, Cys-59-Cys-111, Cys-65-Cys-137, Cys-66-Cys-104, Cys-73-Cys-97, and Cys-91-Cys-102. Residues Lys-121–Lys-133 are important for membrane-damaging activities in eukaryotes and bacteria; heparin-binding.

This sequence belongs to the phospholipase A2 family. Group II subfamily. K49 sub-subfamily. Homodimer; non-covalently linked. Expressed by the venom gland.

Its subcellular location is the secreted. Functionally, snake venom phospholipase A2 homolog that lacks enzymatic activity. Is myotoxic and displays edema-inducing activities. A model of myotoxic mechanism has been proposed: an apo Lys49-PLA2 is activated by the entrance of a hydrophobic molecule (e.g. fatty acid) at the hydrophobic channel of the protein leading to a reorientation of a monomer. This reorientation causes a transition between 'inactive' to 'active' states, causing alignment of C-terminal and membrane-docking sites (MDoS) side-by-side and putting the membrane-disruption sites (MDiS) in the same plane, exposed to solvent and in a symmetric position for both monomers. The MDoS region stabilizes the toxin on membrane by the interaction of charged residues with phospholipid head groups. Subsequently, the MDiS region destabilizes the membrane with penetration of hydrophobic residues. This insertion causes a disorganization of the membrane, allowing an uncontrolled influx of ions (i.e. calcium and sodium), and eventually triggering irreversible intracellular alterations and cell death. The sequence is that of Basic phospholipase A2 homolog 4a from Bothrops asper (Terciopelo).